Here is a 236-residue protein sequence, read N- to C-terminus: Methylosome subunit pICln (236 aa).

Serine 2 is subject to N-acetylserine. Residues 88–109 form a disordered region; sequence EESKEPPSDEDEEDNDDIEPIS. 6 positions are modified to phosphoserine: serine 95, serine 143, serine 192, serine 194, serine 197, and serine 209. Residues 95 to 107 show a composition bias toward acidic residues; sequence SDEDEEDNDDIEP. Phosphothreonine is present on threonine 222.

It belongs to the pICln (TC 1.A.47) family. In terms of assembly, component of the methylosome, a 20S complex containing at least PRMT5/SKB1, WDR77/MEP50 and CLNS1A/pICln. May mediate SNRPD1 and SNRPD3 methylation. Forms a 6S pICln-Sm complex composed of CLNS1A/pICln, SNRPD1, SNRPD2, SNRPE, SNRPF and SNRPG; ring-like structure where CLNS1A/pICln mimics additional Sm proteins and which is unable to assemble into the core snRNP. Interacts with LSM10 and LSM11.

It is found in the cytoplasm. The protein localises to the cytosol. The protein resides in the nucleus. Its subcellular location is the cytoskeleton. Its function is as follows. Involved in both the assembly of spliceosomal snRNPs and the methylation of Sm proteins. Chaperone that regulates the assembly of spliceosomal U1, U2, U4 and U5 small nuclear ribonucleoproteins (snRNPs), the building blocks of the spliceosome, and thereby plays an important role in the splicing of cellular pre-mRNAs. Most spliceosomal snRNPs contain a common set of Sm proteins SNRPB, SNRPD1, SNRPD2, SNRPD3, SNRPE, SNRPF and SNRPG that assemble in a heptameric protein ring on the Sm site of the small nuclear RNA to form the core snRNP (Sm core). In the cytosol, the Sm proteins SNRPD1, SNRPD2, SNRPE, SNRPF and SNRPG are trapped in an inactive 6S pICln-Sm complex by the chaperone CLNS1A that controls the assembly of the core snRNP. Dissociation by the SMN complex of CLNS1A from the trapped Sm proteins and their transfer to an SMN-Sm complex triggers the assembly of core snRNPs and their transport to the nucleus. The sequence is that of Methylosome subunit pICln (Clns1a) from Mus musculus (Mouse).